A 284-amino-acid polypeptide reads, in one-letter code: Protein-S-isoprenylcysteine O-methyltransferase (284 aa).

Residues 1–16 (MAGCAARAPPGSEARL) lie on the Cytoplasmic side of the membrane. The helical transmembrane segment at 17 to 33 (SLATFLLGASVLALPLL) threads the bilayer. The Lumenal portion of the chain corresponds to 34–41 (TRAGLQGR). The chain crosses the membrane as a helical span at residues 42–59 (TGLALYVAGLNALLLLLY). The Cytoplasmic portion of the chain corresponds to 60–69 (RPPRYQIAIR). The chain crosses the membrane as a helical span at residues 70–87 (ACFLGFVFGCGTLLSFSQ). Residues 88 to 92 (SSWSH) are Lumenal-facing. The helical transmembrane segment at 93–112 (FGWYMCSLSLFHYSEYLVTA) threads the bilayer. Residues 113–131 (VNNPKSLSLDSFLLNHSLE) are Cytoplasmic-facing. The chain crosses the membrane as a helical span at residues 132-149 (YTVAALSSWLEFTLENIF). Topologically, residues 150–154 (WPELK) are lumenal. A helical transmembrane segment spans residues 155–174 (QITWLSVTGLLMVVFGECLR). The Cytoplasmic segment spans residues 175-212 (KAAMFTAGSNFNHVVQNEKSDTHTLVTSGVYAWFRHPS). Residues Q190, 197–200 (HTLV), Y205, and 210–213 (HPSY) each bind S-adenosyl-L-methionine. The chain crosses the membrane as a helical span at residues 213–228 (YVGWFYWSIGTQVMLC). Residue N229 is a topological domain, lumenal. Residues 230-244 (PICGVSYALTVWRFF) form a helical membrane-spanning segment. The Cytoplasmic portion of the chain corresponds to 245–284 (RDRTEEEEISLIHFFGEEYLEYKKRVPTGLPFIKGVKVDL). A substrate-binding site is contributed by R247. E251 provides a ligand contact to S-adenosyl-L-methionine.

It belongs to the class VI-like SAM-binding methyltransferase superfamily. Isoprenylcysteine carboxyl methyltransferase family. In terms of tissue distribution, ubiquitously expressed. Expressed at higher levels in the cerebellum and putamen than in other brain regions. Abundant expression seen in the Purkinje cells and pontine neurons.

It localises to the endoplasmic reticulum membrane. The enzyme catalyses [protein]-C-terminal S-[(2E,6E)-farnesyl]-L-cysteine + S-adenosyl-L-methionine = [protein]-C-terminal S-[(2E,6E)-farnesyl]-L-cysteine methyl ester + S-adenosyl-L-homocysteine. With respect to regulation, competitively inhibited by N-acetyl-S-trans,trans-farnesyl-l-cysteine (AFC). Functionally, catalyzes the post-translational methylation of isoprenylated C-terminal cysteine residues. This is Protein-S-isoprenylcysteine O-methyltransferase (ICMT) from Homo sapiens (Human).